We begin with the raw amino-acid sequence, 79 residues long: Small polypeptide DEVIL 8 (79 aa).

Residues 1–12 show a composition bias toward polar residues; the sequence is MSRLRNSAQLQL. The disordered stretch occupies residues 1-37; that stretch reads MSRLRNSAQLQLSKKESLGDNGGALNTTRSSRQKQGK. A glycan (N-linked (GlcNAc...) asparagine) is linked at asparagine 26. The segment at 39–70 is required for DVL/RTFL small polypeptide activity; the sequence is GFTRKCGRLVKEQRARFYIMRRCVVMLICWTD. A helical transmembrane segment spans residues 55–71; the sequence is FYIMRRCVVMLICWTDH. The N-linked (GlcNAc...) asparagine glycan is linked to asparagine 74.

The protein belongs to the DVL/RTFL small polypeptides family.

The protein localises to the cell membrane. In terms of biological role, small polypeptide acting as a regulatory molecule which coordinates cellular responses required for differentiation, growth and development, probably by restricting polar cell proliferation in lateral organs and coordinating socket cell recruitment and differentiation at trichome sites. The protein is Small polypeptide DEVIL 8 of Arabidopsis thaliana (Mouse-ear cress).